Consider the following 178-residue polypeptide: High mobility group B protein 1 (178 aa).

Composition is skewed to basic and acidic residues over residues 1-52 and 101-118; these read MKTA…DPNK and APYE…EKQM. Disordered regions lie at residues 1 to 59 and 75 to 178; these read MKTA…APSA and NPNV…EEED. A DNA-binding region (HMG box) is located at residues 53–122; it reads PKRAPSAFFV…EYEKQMDAYN (70 aa). Phosphoserine occurs at positions 137 and 146. Residues 140–178 show a composition bias toward acidic residues; it reads NDEDEASGEEELLEKEAAGDDEEEEEEEDDDDDDDEEED.

Belongs to the HMGB family. Expressed in cotyledons, roots, stems, leaves and flowers (excluding pedicels).

The protein resides in the nucleus. Binds preferentially double-stranded DNA. Modulates general plant growth and stress tolerance. Confers sensitivity to salt and genotoxic (methyl methanesulfonate, MMS) stresses. The sequence is that of High mobility group B protein 1 (HMGB1) from Arabidopsis thaliana (Mouse-ear cress).